The chain runs to 122 residues: Basic phospholipase A2 (122 aa).

Disulfide bonds link Cys26–Cys115, Cys28–Cys44, Cys43–Cys95, Cys49–Cys122, Cys50–Cys88, Cys57–Cys81, and Cys75–Cys86. Residues Tyr27, Gly29, and Gly31 each coordinate Ca(2+). His47 is an active-site residue. Asp48 provides a ligand contact to Ca(2+). Residue Asp89 is part of the active site.

It belongs to the phospholipase A2 family. Group II subfamily. D49 sub-subfamily. As to quaternary structure, homodimer. Ca(2+) serves as cofactor. In terms of tissue distribution, expressed by the venom gland.

Its subcellular location is the secreted. It catalyses the reaction a 1,2-diacyl-sn-glycero-3-phosphocholine + H2O = a 1-acyl-sn-glycero-3-phosphocholine + a fatty acid + H(+). Functionally, snake venom phospholipase A2 (PLA2) that inhibits neuromuscular transmission by blocking acetylcholine release from the nerve termini. PLA2 catalyzes the calcium-dependent hydrolysis of the 2-acyl groups in 3-sn-phosphoglycerides. In Gloydius blomhoffii (Mamushi), this protein is Basic phospholipase A2.